The chain runs to 385 residues: Deoxyguanosinetriphosphate triphosphohydrolase-like protein (385 aa).

The segment covering 1 to 14 (MTEGVEGRSQERSD) has biased composition (basic and acidic residues). A disordered region spans residues 1-23 (MTEGVEGRSQERSDLAGFAARSA). Positions 75 to 204 (RLTHSLEVAQ…INYADEIAYN (130 aa)) constitute an HD domain.

Belongs to the dGTPase family. Type 2 subfamily.

This is Deoxyguanosinetriphosphate triphosphohydrolase-like protein from Geobacter metallireducens (strain ATCC 53774 / DSM 7210 / GS-15).